The primary structure comprises 259 residues: Hydroxyacylglutathione hydrolase (259 aa).

7 residues coordinate Zn(2+): histidine 56, histidine 58, aspartate 60, histidine 61, histidine 112, aspartate 133, and histidine 171. A compositionally biased stretch (basic and acidic residues) spans 224 to 238 (RTRETSVKEKADERS). The disordered stretch occupies residues 224-245 (RTRETSVKEKADERSSGQNTSQ).

The protein belongs to the metallo-beta-lactamase superfamily. Glyoxalase II family. As to quaternary structure, monomer. The cofactor is Zn(2+).

It catalyses the reaction an S-(2-hydroxyacyl)glutathione + H2O = a 2-hydroxy carboxylate + glutathione + H(+). It participates in secondary metabolite metabolism; methylglyoxal degradation; (R)-lactate from methylglyoxal: step 2/2. Thiolesterase that catalyzes the hydrolysis of S-D-lactoyl-glutathione to form glutathione and D-lactic acid. The protein is Hydroxyacylglutathione hydrolase of Pseudomonas savastanoi pv. phaseolicola (strain 1448A / Race 6) (Pseudomonas syringae pv. phaseolicola (strain 1448A / Race 6)).